An 829-amino-acid chain; its full sequence is Probable receptor-like protein kinase At5g59700 (829 aa).

The N-terminal stretch at Met1–Gly24 is a signal peptide. Topologically, residues Tyr25–Met406 are extracellular. N-linked (GlcNAc...) asparagine glycans are attached at residues Asn40, Asn216, Asn279, and Asn380. A helical transmembrane segment spans residues Ile407–Leu427. Topologically, residues Tyr428–Arg829 are cytoplasmic. The region spanning Phe482–Ala755 is the Protein kinase domain. ATP contacts are provided by residues Ile488–Val496 and Lys510. The active-site Proton acceptor is the Asp606.

This sequence belongs to the protein kinase superfamily. Ser/Thr protein kinase family.

The protein localises to the cell membrane. In Arabidopsis thaliana (Mouse-ear cress), this protein is Probable receptor-like protein kinase At5g59700.